The following is a 507-amino-acid chain: Nuclear distribution protein PAC1 (507 aa).

A coiled-coil region spans residues Ser72–Lys98. WD repeat units lie at residues Gln125 to Pro164, Ala170 to Ile222, Gly225 to Thr265, Gly268 to Leu312, Gly315 to Asn389, Gly410 to Arg449, and Pro474 to Ser507.

This sequence belongs to the WD repeat LIS1/nudF family. Self-associates. Interacts with NDL1 and dynein.

The protein resides in the cytoplasm. The protein localises to the cytoskeleton. It localises to the spindle pole. Its function is as follows. Positively regulates the activity of the minus-end directed microtubule motor protein dynein. Plays a central role in positioning the mitotic spindle at the bud neck during cell division. Targets cytoplasmic dynein to microtubule plus ends, thereby promoting dynein-mediated microtubule sliding along the bud cortex and consequently the movement of the mitotic spindle to the bud neck. The polypeptide is Nuclear distribution protein PAC1 (Meyerozyma guilliermondii (strain ATCC 6260 / CBS 566 / DSM 6381 / JCM 1539 / NBRC 10279 / NRRL Y-324) (Yeast)).